A 305-amino-acid polypeptide reads, in one-letter code: tRNA pseudouridine synthase B (305 aa).

Catalysis depends on Asp48, which acts as the Nucleophile.

This sequence belongs to the pseudouridine synthase TruB family. Type 1 subfamily.

The catalysed reaction is uridine(55) in tRNA = pseudouridine(55) in tRNA. In terms of biological role, responsible for synthesis of pseudouridine from uracil-55 in the psi GC loop of transfer RNAs. This chain is tRNA pseudouridine synthase B, found in Pseudomonas putida (strain GB-1).